The chain runs to 75 residues: UPF0352 protein YejL (75 aa).

This sequence belongs to the UPF0352 family.

This Escherichia coli O127:H6 (strain E2348/69 / EPEC) protein is UPF0352 protein YejL.